The chain runs to 127 residues: Small ribosomal subunit protein uS11c (127 aa).

It belongs to the universal ribosomal protein uS11 family. In terms of assembly, part of the 30S ribosomal subunit.

Its subcellular location is the plastid. The protein localises to the chloroplast. The sequence is that of Small ribosomal subunit protein uS11c from Heterosigma akashiwo (strain NIES-293 / 8280G21-1).